Here is a 226-residue protein sequence, read N- to C-terminus: Urease accessory protein UreF (226 aa).

Belongs to the UreF family. In terms of assembly, ureD, UreF and UreG form a complex that acts as a GTP-hydrolysis-dependent molecular chaperone, activating the urease apoprotein by helping to assemble the nickel containing metallocenter of UreC. The UreE protein probably delivers the nickel.

It is found in the cytoplasm. Required for maturation of urease via the functional incorporation of the urease nickel metallocenter. In Burkholderia vietnamiensis (strain G4 / LMG 22486) (Burkholderia cepacia (strain R1808)), this protein is Urease accessory protein UreF.